We begin with the raw amino-acid sequence, 113 residues long: Hydrogenase maturation factor HypA (113 aa).

Histidine 2 serves as a coordination point for Ni(2+). Zn(2+)-binding residues include cysteine 73, cysteine 76, cysteine 89, and cysteine 92.

It belongs to the HypA/HybF family.

Involved in the maturation of [NiFe] hydrogenases. Required for nickel insertion into the metal center of the hydrogenase. The polypeptide is Hydrogenase maturation factor HypA (Azorhizobium caulinodans (strain ATCC 43989 / DSM 5975 / JCM 20966 / LMG 6465 / NBRC 14845 / NCIMB 13405 / ORS 571)).